Consider the following 591-residue polypeptide: Dihydroxyacetone kinase 2 (591 aa).

In terms of domain architecture, DhaK spans 8–344; sequence SDGNIVTPYL…FDYPTTASGW (337 aa). Residues 40–59 form a disordered region; that stretch reads ASAPNSGNPPKVSLVSGGGS. Residues 58 to 61, K109, and D114 contribute to the substrate site; that span reads GSGH. The active-site Tele-hemiaminal-histidine intermediate is the H223. One can recognise a DhaL domain in the interval 384–587; it reads DTFAKILLAG…LAALLDGFVT (204 aa). Residues 413–416, 459–460, 511–512, and 572–574 each bind ATP; these read DGDC, TS, TL, and DPG.

It belongs to the dihydroxyacetone kinase (DAK) family.

It carries out the reaction dihydroxyacetone + ATP = dihydroxyacetone phosphate + ADP + H(+). The enzyme catalyses D-glyceraldehyde + ATP = D-glyceraldehyde 3-phosphate + ADP + H(+). It functions in the pathway polyol metabolism; glycerol fermentation; glycerone phosphate from glycerol (oxidative route): step 2/2. Functionally, catalyzes both the phosphorylation of dihydroxyacetone and of glyceraldehyde. The chain is Dihydroxyacetone kinase 2 (DAK2) from Saccharomyces cerevisiae (strain ATCC 204508 / S288c) (Baker's yeast).